A 137-amino-acid chain; its full sequence is Small ribosomal subunit protein uS13 (137 aa).

The tract at residues 114 to 137 is disordered; the sequence is VTQKNARTRKGPRKTIMAKKDKGK. A compositionally biased stretch (basic residues) spans 119–130; the sequence is ARTRKGPRKTIM.

The protein belongs to the universal ribosomal protein uS13 family. Part of the 30S ribosomal subunit. Forms a loose heterodimer with protein S19. Forms two bridges to the 50S subunit in the 70S ribosome.

Located at the top of the head of the 30S subunit, it contacts several helices of the 16S rRNA. In the 70S ribosome it contacts the 23S rRNA (bridge B1a) and protein L5 of the 50S subunit (bridge B1b), connecting the 2 subunits; these bridges are implicated in subunit movement. Contacts the tRNAs in the A and P-sites. This chain is Small ribosomal subunit protein uS13, found in Mesomycoplasma hyopneumoniae (strain 232) (Mycoplasma hyopneumoniae).